A 274-amino-acid polypeptide reads, in one-letter code: Kit ligand (274 aa).

The signal sequence occupies residues 1-25; it reads MKKTQTWIITCIYLQLLLFNPLVRT. Q26 is modified (pyrrolidone carboxylic acid). Residues 26-215 are Extracellular-facing; the sequence is QGICRNRVTD…SDSIEDSSLQ (190 aa). 2 disulfide bridges follow: C29/C114 and C68/C164. N90, N97, N145, and N196 each carry an N-linked (GlcNAc...) asparagine glycan. A helical transmembrane segment spans residues 216 to 238; that stretch reads WAAVALPAFFSLVIGFAFGALYW. Over 239–274 the chain is Cytoplasmic; it reads KKKQPNLTRTVENIQINEEDNEISMLQEKEREFQEV.

It belongs to the SCF family. In terms of assembly, homodimer, non-covalently linked. Heterotetramer with KIT, binding two KIT molecules; thereby mediates KIT dimerization and subsequent activation by autophosphorylation. A soluble form is produced by proteolytic processing of the extracellular domain.

It is found in the cytoplasm. The protein resides in the cytoskeleton. Its subcellular location is the cell membrane. The protein localises to the cell projection. It localises to the lamellipodium. It is found in the filopodium. The protein resides in the secreted. Functionally, ligand for the receptor-type protein-tyrosine kinase KIT. Plays an essential role in the regulation of cell survival and proliferation, hematopoiesis, stem cell maintenance, gametogenesis, mast cell development, migration and function, and in melanogenesis. KITLG/SCF binding can activate several signaling pathways. Promotes phosphorylation of PIK3R1, the regulatory subunit of phosphatidylinositol 3-kinase, and subsequent activation of the kinase AKT1. KITLG/SCF and KIT also transmit signals via GRB2 and activation of RAS, RAF1 and the MAP kinases MAPK1/ERK2 and/or MAPK3/ERK1. KITLG/SCF and KIT promote activation of STAT family members STAT1, STAT3 and STAT5. KITLG/SCF and KIT promote activation of PLCG1, leading to the production of the cellular signaling molecules diacylglycerol and inositol 1,4,5-trisphosphate. KITLG/SCF acts synergistically with other cytokines, probably interleukins. The polypeptide is Kit ligand (KITLG) (Sus scrofa (Pig)).